We begin with the raw amino-acid sequence, 493 residues long: Desmethylyatein synthase (493 aa).

Residues 1–21 (METFQCLTLFLLFISTVFILK) form a helical membrane-spanning segment. Cys-434 serves as a coordination point for heme.

It belongs to the cytochrome P450 family. It depends on heme as a cofactor.

It localises to the membrane. It catalyses the reaction (-)-bursehernin + reduced [NADPH--hemoprotein reductase] + O2 = (-)-5'-demethylyatein + oxidized [NADPH--hemoprotein reductase] + H2O + H(+). It participates in aromatic compound metabolism; phenylpropanoid biosynthesis. In terms of biological role, cytochrome P450 involved in the biosynthesis of etoposide, a chemotherapeutic compound of the topoisomerase inhibitor family. Catalyzes the conversion of bursehernin to demethylyatein. The chain is Desmethylyatein synthase from Sinopodophyllum hexandrum (Himalayan may apple).